The chain runs to 464 residues: GTPase Der (464 aa).

EngA-type G domains lie at 3–166 (PVIA…PEVE) and 178–351 (IRIA…DSAF). GTP-binding positions include 9–16 (GRPNVGKS), 56–60 (DTGGL), 118–121 (NKTD), 184–191 (GRPNAGKS), 231–235 (DTAGV), and 296–299 (NKWD). In terms of domain architecture, KH-like spans 352–436 (IKVSTNHLTK…PIRLEFKTGE (85 aa)).

It belongs to the TRAFAC class TrmE-Era-EngA-EngB-Septin-like GTPase superfamily. EngA (Der) GTPase family. As to quaternary structure, associates with the 50S ribosomal subunit.

In terms of biological role, GTPase that plays an essential role in the late steps of ribosome biogenesis. This is GTPase Der from Thioalkalivibrio sulfidiphilus (strain HL-EbGR7).